A 684-amino-acid polypeptide reads, in one-letter code: Glycine--tRNA ligase beta subunit (684 aa).

It belongs to the class-II aminoacyl-tRNA synthetase family. Tetramer of two alpha and two beta subunits.

The protein resides in the cytoplasm. The catalysed reaction is tRNA(Gly) + glycine + ATP = glycyl-tRNA(Gly) + AMP + diphosphate. The polypeptide is Glycine--tRNA ligase beta subunit (Pseudomonas entomophila (strain L48)).